A 311-amino-acid polypeptide reads, in one-letter code: Probable manganese-dependent inorganic pyrophosphatase (311 aa).

Histidine 9, aspartate 13, aspartate 15, aspartate 77, histidine 99, and aspartate 151 together coordinate Mn(2+).

It belongs to the PPase class C family. Requires Mn(2+) as cofactor.

It is found in the cytoplasm. The catalysed reaction is diphosphate + H2O = 2 phosphate + H(+). The sequence is that of Probable manganese-dependent inorganic pyrophosphatase from Streptococcus pneumoniae (strain JJA).